The primary structure comprises 284 residues: Protoheme IX farnesyltransferase (284 aa).

9 consecutive transmembrane segments (helical) span residues Val13–Pro33, Leu35–Leu55, Phe84–Ile104, Leu106–Trp126, Asn134–Ala154, Val163–Leu183, Val205–Val225, Met229–Tyr249, and Phe264–Ile284.

The protein belongs to the UbiA prenyltransferase family. Protoheme IX farnesyltransferase subfamily.

The protein resides in the cell inner membrane. It catalyses the reaction heme b + (2E,6E)-farnesyl diphosphate + H2O = Fe(II)-heme o + diphosphate. It participates in porphyrin-containing compound metabolism; heme O biosynthesis; heme O from protoheme: step 1/1. Functionally, converts heme B (protoheme IX) to heme O by substitution of the vinyl group on carbon 2 of heme B porphyrin ring with a hydroxyethyl farnesyl side group. This is Protoheme IX farnesyltransferase from Leptospira biflexa serovar Patoc (strain Patoc 1 / Ames).